A 312-amino-acid polypeptide reads, in one-letter code: Malate dehydrogenase (312 aa).

NAD(+) is bound by residues 7 to 13 (GAAGGIG) and aspartate 34. 2 residues coordinate substrate: arginine 81 and arginine 87. Residues asparagine 94 and 117 to 119 (ITN) each bind NAD(+). 2 residues coordinate substrate: asparagine 119 and arginine 153. Catalysis depends on histidine 177, which acts as the Proton acceptor. Methionine 227 lines the NAD(+) pocket.

The protein belongs to the LDH/MDH superfamily. MDH type 1 family. Homodimer.

The catalysed reaction is (S)-malate + NAD(+) = oxaloacetate + NADH + H(+). Functionally, catalyzes the reversible oxidation of malate to oxaloacetate. The sequence is that of Malate dehydrogenase from Enterobacter sp. (strain 638).